The following is a 131-amino-acid chain: MKKVMFVCKRNSCRSQMAEGFAKTLGAGKIAVTSCGLESSRVHPTAIAMMEEVGIDISGQTSDPIENFNADDYDVVISLCGCGVNLPPEWVTQEIFEDWQLEDPDGQSLEVFRTVRGQVKERVENLIAKIS.

Residues Cys-8 and Cys-80 each act as nucleophile in the active site. 2 cysteine pairs are disulfide-bonded: Cys-8-Cys-80 and Cys-80-Cys-82.

Belongs to the low molecular weight phosphotyrosine protein phosphatase family. Homodimer.

It carries out the reaction O-phospho-L-tyrosyl-[protein] + H2O = L-tyrosyl-[protein] + phosphate. The enzyme catalyses [glutaredoxin]-dithiol + arsenate + glutathione + H(+) = glutathionyl-S-S-[glutaredoxin] + arsenite + H2O. Its function is as follows. Reduces arsenate [As(V)] to arsenite [As(III)] using glutathione and glutaredoxin as sources of reducing equivalents. GrxA is the most effective electron donor in vivo compared to other glutaredoxins. Constitutes the major arsenate reductase compared to ArsI1 and ArsI2. Also shows weak phosphatase activity toward p-nitrophenyl phosphate. The sequence is that of Glutaredoxin arsenate reductase (arsC) from Synechocystis sp. (strain ATCC 27184 / PCC 6803 / Kazusa).